The sequence spans 89 residues: Submaxillary mucin (89 aa).

A disordered region spans residues 1–89 (AGSVGRTAGG…VGGSPVATTL (89 aa)). S3 carries an O-linked (GalNAc...) serine; partial glycan. T7 and T14 each carry an O-linked (GalNAc...) threonine; partial glycan. Residue S15 is glycosylated (O-linked (GalNAc...) serine; partial). T23 is a glycosylation site (O-linked (GalNAc...) threonine; partial). O-linked (GalNAc...) serine; partial glycosylation occurs at S25. The O-linked (GalNAc...) threonine; partial glycan is linked to T27. Residue S29 is glycosylated (O-linked (GalNAc...) serine; partial). T34 is a glycosylation site (O-linked (GalNAc...) threonine; partial). An O-linked (GalNAc...) serine; partial glycan is attached at S38. T42 carries an O-linked (GalNAc...) threonine; partial glycan. 2 O-linked (GalNAc...) serine; partial glycosylation sites follow: S47 and S49. T50 is a glycosylation site (O-linked (GalNAc...) threonine; partial). A glycan (O-linked (GalNAc...) serine; partial) is linked at S54. Residues 56–71 (APGTTLAGRAGTTLGP) are compositionally biased toward low complexity. O-linked (GalNAc...) threonine; partial glycosylation is found at T59, T60, T67, and T68. S73 and S76 each carry an O-linked (GalNAc...) serine; partial glycan. T78 carries O-linked (GalNAc...) threonine; partial glycosylation. O-linked (GalNAc...) serine; partial glycosylation is present at S83.

Post-translationally, heavily O-glycosylated at most but not all Ser and Thr residues. As to expression, expressed in the submaxillary salivary gland.

It localises to the secreted. In Canis lupus familiaris (Dog), this protein is Submaxillary mucin.